The primary structure comprises 439 residues: sn-glycerol-3-phosphate-binding periplasmic protein UgpB (439 aa).

An N-terminal signal peptide occupies residues 1 to 25; the sequence is MFNNAIRKTSICVALTLAFSANAMA. Positions 67, 91, 146, 272, 309, 348, and 399 each coordinate sn-glycerol 3-phosphate.

It belongs to the bacterial solute-binding protein 1 family. In terms of assembly, the complex is composed of two ATP-binding proteins (UgpC), two transmembrane proteins (UgpA and UgpE) and a solute-binding protein (UgpB).

The protein resides in the periplasm. Functionally, part of the ABC transporter complex UgpBAEC involved in sn-glycerol-3-phosphate (G3P) import. Binds G3P. The chain is sn-glycerol-3-phosphate-binding periplasmic protein UgpB (ugpB) from Yersinia enterocolitica serotype O:8 / biotype 1B (strain NCTC 13174 / 8081).